The chain runs to 406 residues: Cysteine desulfurase (406 aa).

N6-(pyridoxal phosphate)lysine is present on lysine 226. Cysteine 364 (cysteine persulfide intermediate) is an active-site residue.

It belongs to the class-V pyridoxal-phosphate-dependent aminotransferase family. Csd subfamily. In terms of assembly, homodimer. Interacts with SufE and the SufBCD complex composed of SufB, SufC and SufD. The interaction with SufE is required to mediate the direct transfer of the sulfur atom from the S-sulfanylcysteine. Pyridoxal 5'-phosphate is required as a cofactor.

It localises to the cytoplasm. The enzyme catalyses (sulfur carrier)-H + L-cysteine = (sulfur carrier)-SH + L-alanine. It carries out the reaction L-selenocysteine + AH2 = hydrogenselenide + L-alanine + A + H(+). It participates in cofactor biosynthesis; iron-sulfur cluster biosynthesis. In terms of biological role, cysteine desulfurases mobilize the sulfur from L-cysteine to yield L-alanine, an essential step in sulfur metabolism for biosynthesis of a variety of sulfur-containing biomolecules. Component of the suf operon, which is activated and required under specific conditions such as oxidative stress and iron limitation. Acts as a potent selenocysteine lyase in vitro, that mobilizes selenium from L-selenocysteine. Selenocysteine lyase activity is however unsure in vivo. The chain is Cysteine desulfurase from Escherichia coli O45:K1 (strain S88 / ExPEC).